Reading from the N-terminus, the 362-residue chain is RING-H2 finger protein ATL52 (362 aa).

Residues 58–78 traverse the membrane as a helical segment; sequence LIALIGILTSALILVSYYTLI. An RING-type; atypical zinc finger spans residues 142 to 184; the sequence is CSVCLSEFEENESLRLLPKCNHAFHLPCIDTWLKSHSNCPLCR. 2 disordered regions span residues 252-271 and 296-333; these read DARS…DEDS and EDEE…RSGG. Basic and acidic residues predominate over residues 309–319; that stretch reads QRREEGEDGDG.

This sequence belongs to the RING-type zinc finger family. ATL subfamily. Expressed in flowers.

It localises to the membrane. It catalyses the reaction S-ubiquitinyl-[E2 ubiquitin-conjugating enzyme]-L-cysteine + [acceptor protein]-L-lysine = [E2 ubiquitin-conjugating enzyme]-L-cysteine + N(6)-ubiquitinyl-[acceptor protein]-L-lysine.. It participates in protein modification; protein ubiquitination. This Arabidopsis thaliana (Mouse-ear cress) protein is RING-H2 finger protein ATL52 (ATL52).